The sequence spans 182 residues: Ribosome-recycling factor (182 aa).

It belongs to the RRF family.

It is found in the cytoplasm. Functionally, responsible for the release of ribosomes from messenger RNA at the termination of protein biosynthesis. May increase the efficiency of translation by recycling ribosomes from one round of translation to another. The sequence is that of Ribosome-recycling factor from Synechocystis sp. (strain ATCC 27184 / PCC 6803 / Kazusa).